The following is a 317-amino-acid chain: Probable RuBisCO transcriptional regulator (317 aa).

In terms of domain architecture, HTH lysR-type spans 6-63 (FTLDQLRILKAIAKEGSFKKAANSLYVSQPAISLQIQNLERQLNVALFERGNKKATLT). The H-T-H motif DNA-binding region spans 23 to 42 (FKKAANSLYVSQPAISLQIQ).

This sequence belongs to the LysR transcriptional regulatory family.

The protein resides in the plastid. It is found in the chloroplast. Its function is as follows. Trans-acting transcriptional regulator of RuBisCO genes (rbcL and rbcS) expression. The polypeptide is Probable RuBisCO transcriptional regulator (rbcR) (Porphyra purpurea (Red seaweed)).